Here is a 278-residue protein sequence, read N- to C-terminus: Trans-2,3-dihydro-3-hydroxyanthranilate isomerase (278 aa).

Glutamate 45 is a catalytic residue.

It belongs to the PhzF family.

It catalyses the reaction (5S,6S)-6-amino-5-hydroxycyclohexa-1,3-diene-1-carboxyate = (1R,6S)-6-amino-5-oxocyclohex-2-ene-1-carboxylate. It functions in the pathway secondary metabolite biosynthesis; pyocyanine biosynthesis. In terms of biological role, isomerase that catalyzes the condensation of two molecules of trans-2,3-dihydro-3-hydroxyanthranilic acid (DHHA) into the phenazine ring system. The final product is not yet known. This Pseudomonas aeruginosa (strain ATCC 15692 / DSM 22644 / CIP 104116 / JCM 14847 / LMG 12228 / 1C / PRS 101 / PAO1) protein is Trans-2,3-dihydro-3-hydroxyanthranilate isomerase (phzF1).